Reading from the N-terminus, the 199-residue chain is NADH-quinone oxidoreductase subunit C (199 aa).

The protein belongs to the complex I 30 kDa subunit family. As to quaternary structure, NDH-1 is composed of 14 different subunits. Subunits NuoB, C, D, E, F, and G constitute the peripheral sector of the complex.

The protein localises to the cell inner membrane. It carries out the reaction a quinone + NADH + 5 H(+)(in) = a quinol + NAD(+) + 4 H(+)(out). In terms of biological role, NDH-1 shuttles electrons from NADH, via FMN and iron-sulfur (Fe-S) centers, to quinones in the respiratory chain. The immediate electron acceptor for the enzyme in this species is believed to be ubiquinone. Couples the redox reaction to proton translocation (for every two electrons transferred, four hydrogen ions are translocated across the cytoplasmic membrane), and thus conserves the redox energy in a proton gradient. This Rhodopseudomonas palustris (strain BisB18) protein is NADH-quinone oxidoreductase subunit C.